A 445-amino-acid polypeptide reads, in one-letter code: Phosphoglucosamine mutase (445 aa).

Residue serine 102 is the Phosphoserine intermediate of the active site. Mg(2+) contacts are provided by serine 102, aspartate 241, aspartate 243, and aspartate 245. At serine 102 the chain carries Phosphoserine.

This sequence belongs to the phosphohexose mutase family. Requires Mg(2+) as cofactor. Activated by phosphorylation.

It catalyses the reaction alpha-D-glucosamine 1-phosphate = D-glucosamine 6-phosphate. Functionally, catalyzes the conversion of glucosamine-6-phosphate to glucosamine-1-phosphate. The chain is Phosphoglucosamine mutase from Rhodococcus erythropolis (strain PR4 / NBRC 100887).